Consider the following 259-residue polypeptide: UPF0246 protein ABBFA_001173 (259 aa).

Belongs to the UPF0246 family.

The protein is UPF0246 protein ABBFA_001173 of Acinetobacter baumannii (strain AB307-0294).